The following is a 616-amino-acid chain: Protein cereblon (616 aa).

3 disordered regions span residues 1–39 (MDEEETAEINAQEQEVAGSAGEAAAGPSGAEVQPNDDSV), 63–137 (FGPS…AMPR), and 182–220 (SQERRRSRNSDEVSPEAEDDELPEHPPPPPPRPPIDIDM). Residues 11-32 (AQEQEVAGSAGEAAAGPSGAEV) show a composition bias toward low complexity. A compositionally biased stretch (acidic residues) spans 96–107 (SEEDIVLDDGTE). Residues 183-192 (QERRRSRNSD) show a composition bias toward basic and acidic residues. Positions 194-203 (VSPEAEDDEL) are enriched in acidic residues. Positions 206–215 (HPPPPPPRPP) are enriched in pro residues. The region spanning 257 to 482 (HMLIFLHQYI…LIGGILKEET (226 aa)) is the Lon N-terminal domain. A CULT domain is found at 481 to 590 (ETLFYCRYCN…LAGSSVRIGK (110 aa)). Zn(2+) contacts are provided by Cys486, Cys489, Cys555, and Cys558.

Belongs to the CRBN family. As to quaternary structure, likely a component of a DCX (DDB1-CUL4-X-box) protein ligase complex. May interact with pic/DDB1. In terms of processing, ubiquitinated.

The protein resides in the nucleus. Its pathway is protein modification; protein ubiquitination. Its function is as follows. Substrate recognition component of a DCX (DDB1-CUL4-X-box) E3 protein ligase complex that mediates the ubiquitination and subsequent proteasomal degradation of target proteins. Has an essential role in mediating growth by negatively regulating insulin signaling. It also has a role in maintaining presynaptic function in the neuromuscular junction synapses of third-instar larvae. The sequence is that of Protein cereblon from Drosophila persimilis (Fruit fly).